The chain runs to 577 residues: Aspartate--tRNA(Asp/Asn) ligase (577 aa).

Glu171 serves as a coordination point for L-aspartate. Positions 195 to 198 (QLFK) are aspartate. Residue Arg217 coordinates L-aspartate. ATP contacts are provided by residues 217–219 (RDE) and Gln226. His444 contributes to the L-aspartate binding site. Residue Glu474 coordinates ATP. Arg481 provides a ligand contact to L-aspartate. 526–529 (GFDR) is an ATP binding site.

It belongs to the class-II aminoacyl-tRNA synthetase family. Type 1 subfamily. Homodimer.

Its subcellular location is the cytoplasm. It carries out the reaction tRNA(Asx) + L-aspartate + ATP = L-aspartyl-tRNA(Asx) + AMP + diphosphate. In terms of biological role, aspartyl-tRNA synthetase with relaxed tRNA specificity since it is able to aspartylate not only its cognate tRNA(Asp) but also tRNA(Asn). Reaction proceeds in two steps: L-aspartate is first activated by ATP to form Asp-AMP and then transferred to the acceptor end of tRNA(Asp/Asn). This Helicobacter pylori (strain HPAG1) protein is Aspartate--tRNA(Asp/Asn) ligase.